The chain runs to 25 residues: LASP1 neighbor protein (25 aa).

The helical transmembrane segment at 4–24 (IFILMFFAIIGLVILSYIIYL) threads the bilayer.

It is found in the membrane. Its function is as follows. May play a key role in the skin fibroblasts (FBs)-keratinocyte-like cells (KLCs). The protein is LASP1 neighbor protein of Homo sapiens (Human).